A 560-amino-acid polypeptide reads, in one-letter code: DNA ligase B (560 aa).

Catalysis depends on lysine 124, which acts as the N6-AMP-lysine intermediate.

It belongs to the NAD-dependent DNA ligase family. LigB subfamily.

It carries out the reaction NAD(+) + (deoxyribonucleotide)n-3'-hydroxyl + 5'-phospho-(deoxyribonucleotide)m = (deoxyribonucleotide)n+m + AMP + beta-nicotinamide D-nucleotide.. Catalyzes the formation of phosphodiester linkages between 5'-phosphoryl and 3'-hydroxyl groups in double-stranded DNA using NAD as a coenzyme and as the energy source for the reaction. The chain is DNA ligase B from Shigella flexneri serotype 5b (strain 8401).